A 179-amino-acid polypeptide reads, in one-letter code: MFPMVTGFMNYGQQTVRAARYIGQSFMITLSHANRLPVTIQYPYEKSITSERFRGRIHFEFDKCIACEVCVRVCPIDLPVVDWRLETDIRKKRLLNYSIDFGICIFCGNCVEYCPTNCLSMTEEYELSTYDRHELNYNQIALGRLPMSVIGDYTVRTIMNSTQIKISMDKSLDSRTITN.

4Fe-4S ferredoxin-type domains follow at residues 55 to 84 and 95 to 124; these read GRIH…VDWR and LNYS…MTEE. [4Fe-4S] cluster is bound by residues Cys64, Cys67, Cys70, Cys74, Cys104, Cys107, Cys110, and Cys114.

The protein belongs to the complex I 23 kDa subunit family. As to quaternary structure, NDH is composed of at least 16 different subunits, 5 of which are encoded in the nucleus. It depends on [4Fe-4S] cluster as a cofactor.

It localises to the plastid. It is found in the chloroplast thylakoid membrane. It catalyses the reaction a plastoquinone + NADH + (n+1) H(+)(in) = a plastoquinol + NAD(+) + n H(+)(out). The catalysed reaction is a plastoquinone + NADPH + (n+1) H(+)(in) = a plastoquinol + NADP(+) + n H(+)(out). Functionally, NDH shuttles electrons from NAD(P)H:plastoquinone, via FMN and iron-sulfur (Fe-S) centers, to quinones in the photosynthetic chain and possibly in a chloroplast respiratory chain. The immediate electron acceptor for the enzyme in this species is believed to be plastoquinone. Couples the redox reaction to proton translocation, and thus conserves the redox energy in a proton gradient. This is NAD(P)H-quinone oxidoreductase subunit I, chloroplastic from Nuphar advena (Common spatterdock).